Reading from the N-terminus, the 347-residue chain is D-fructose 1,6-bisphosphatase class 2/sedoheptulose 1,7-bisphosphatase (347 aa).

Mn(2+) is bound by residues D33, E57, D97, and E100. Substrate-binding positions include 100–102, Y131, 176–178, and 198–200; these read EGT, RKR, and DGD. Residue E225 coordinates Mn(2+).

The protein belongs to the FBPase class 2 family. In terms of assembly, homotetramer. Mn(2+) serves as cofactor.

The catalysed reaction is beta-D-fructose 1,6-bisphosphate + H2O = beta-D-fructose 6-phosphate + phosphate. The enzyme catalyses D-sedoheptulose 1,7-bisphosphate + H2O = D-sedoheptulose 7-phosphate + phosphate. Its pathway is carbohydrate biosynthesis; Calvin cycle. Its function is as follows. Catalyzes the hydrolysis of fructose 1,6-bisphosphate (Fru 1,6-P2) and sedoheptulose 1,7-bisphosphate (Sed 1,7-P2) to fructose 6-phosphate and sedoheptulose 7-phosphate, respectively. This Synechococcus sp. (strain JA-2-3B'a(2-13)) (Cyanobacteria bacterium Yellowstone B-Prime) protein is D-fructose 1,6-bisphosphatase class 2/sedoheptulose 1,7-bisphosphatase.